A 658-amino-acid polypeptide reads, in one-letter code: Putative phospholipase B-like lamina ancestor (658 aa).

Positions 1-29 (MLKVVGASWQKTRIGTYILIGAGLLVIGA) are cleaved as a signal peptide. 3 N-linked (GlcNAc...) asparagine glycosylation sites follow: N229, N465, and N486.

Belongs to the phospholipase B-like family. As to expression, expressed in neural and glial progenitors prior to, but not after, differentiation. Not expressed in late third instar disks, but is expressed uniformly by early third instar disks, in the imaginal ring of the proventriculus and in the salivary gland.

The protein resides in the secreted. Functionally, putative phospholipase. Involved in the regulation of cellular plasticity in imaginal disks. This chain is Putative phospholipase B-like lamina ancestor (lama), found in Drosophila melanogaster (Fruit fly).